An 82-amino-acid chain; its full sequence is Small ribosomal subunit protein bS18 (82 aa).

The interval 1–20 (MVDINQIPTRRPFHRRRKTC) is disordered.

Belongs to the bacterial ribosomal protein bS18 family. As to quaternary structure, part of the 30S ribosomal subunit. Forms a tight heterodimer with protein bS6.

Functionally, binds as a heterodimer with protein bS6 to the central domain of the 16S rRNA, where it helps stabilize the platform of the 30S subunit. The sequence is that of Small ribosomal subunit protein bS18 from Brucella abortus (strain 2308).